The sequence spans 292 residues: Phosphatidylserine decarboxylase proenzyme (292 aa).

Catalysis depends on charge relay system; for autoendoproteolytic cleavage activity residues D89, H146, and S252. S252 (schiff-base intermediate with substrate; via pyruvic acid; for decarboxylase activity) is an active-site residue. S252 bears the Pyruvic acid (Ser); by autocatalysis mark.

Belongs to the phosphatidylserine decarboxylase family. PSD-B subfamily. Prokaryotic type I sub-subfamily. As to quaternary structure, heterodimer of a large membrane-associated beta subunit and a small pyruvoyl-containing alpha subunit. It depends on pyruvate as a cofactor. Is synthesized initially as an inactive proenzyme. Formation of the active enzyme involves a self-maturation process in which the active site pyruvoyl group is generated from an internal serine residue via an autocatalytic post-translational modification. Two non-identical subunits are generated from the proenzyme in this reaction, and the pyruvate is formed at the N-terminus of the alpha chain, which is derived from the carboxyl end of the proenzyme. The autoendoproteolytic cleavage occurs by a canonical serine protease mechanism, in which the side chain hydroxyl group of the serine supplies its oxygen atom to form the C-terminus of the beta chain, while the remainder of the serine residue undergoes an oxidative deamination to produce ammonia and the pyruvoyl prosthetic group on the alpha chain. During this reaction, the Ser that is part of the protease active site of the proenzyme becomes the pyruvoyl prosthetic group, which constitutes an essential element of the active site of the mature decarboxylase.

The protein localises to the cell membrane. It carries out the reaction a 1,2-diacyl-sn-glycero-3-phospho-L-serine + H(+) = a 1,2-diacyl-sn-glycero-3-phosphoethanolamine + CO2. Its pathway is phospholipid metabolism; phosphatidylethanolamine biosynthesis; phosphatidylethanolamine from CDP-diacylglycerol: step 2/2. Its function is as follows. Catalyzes the formation of phosphatidylethanolamine (PtdEtn) from phosphatidylserine (PtdSer). The chain is Phosphatidylserine decarboxylase proenzyme from Shewanella baltica (strain OS185).